A 399-amino-acid polypeptide reads, in one-letter code: Acetate kinase (399 aa).

Position 10 (Asn-10) interacts with Mg(2+). Lys-17 contributes to the ATP binding site. A substrate-binding site is contributed by Arg-91. Asp-148 acts as the Proton donor/acceptor in catalysis. Residues 208-212 (HLGNG), 283-285 (DCR), and 331-335 (GIGEN) each bind ATP. Glu-385 provides a ligand contact to Mg(2+).

It belongs to the acetokinase family. As to quaternary structure, homodimer. Requires Mg(2+) as cofactor. Mn(2+) is required as a cofactor.

The protein resides in the cytoplasm. The enzyme catalyses acetate + ATP = acetyl phosphate + ADP. It participates in metabolic intermediate biosynthesis; acetyl-CoA biosynthesis; acetyl-CoA from acetate: step 1/2. Its function is as follows. Catalyzes the formation of acetyl phosphate from acetate and ATP. Can also catalyze the reverse reaction. This Shewanella sp. (strain MR-4) protein is Acetate kinase.